We begin with the raw amino-acid sequence, 785 residues long: Cadherin-7 (785 aa).

The first 27 residues, 1 to 27 (MKLGKVEFCHLLQIIALFLCLSGMNQA), serve as a signal peptide directing secretion. Positions 28 to 47 (EPSRSRSKPYFQSGRTRTKR) are excised as a propeptide. The Extracellular portion of the chain corresponds to 48–607 (SWVWNQFFVL…AYILPAGLST (560 aa)). Cadherin domains follow at residues 49–153 (WVWN…EPKF), 154–262 (LDGP…PPRF), 263–377 (PRRS…PPVF), 378–482 (TSRL…APEF), and 482–599 (FAME…AEAY). Residues asparagine 449 and asparagine 530 are each glycosylated (N-linked (GlcNAc...) asparagine). Residues 608 to 628 (GALIAILACVLTLLVLVLLIV) form a helical membrane-spanning segment. Over 629 to 785 (TMRRRKKEPL…YGSGPDCLYS (157 aa)) the chain is Cytoplasmic.

It localises to the cell membrane. In terms of biological role, cadherins are calcium-dependent cell adhesion proteins. They preferentially interact with themselves in a homophilic manner in connecting cells; cadherins may thus contribute to the sorting of heterogeneous cell types. The sequence is that of Cadherin-7 (CDH7) from Gallus gallus (Chicken).